Here is a 939-residue protein sequence, read N- to C-terminus: Tyrosine-protein kinase Shark (939 aa).

The region spanning 10–106 (WYHGNLSREA…GLPTKLTVPL (97 aa)) is the SH2 1 domain. 3 ANK repeats span residues 153 to 185 (DGQT…SSDS), 186 to 218 (FGCQ…GRNI), and 220 to 252 (NGYV…PRTS). The region spanning 288 to 403 (WYHGTLTREE…GLPVSLKYPV (116 aa)) is the SH2 2 domain. 2 disordered regions span residues 410-446 (EVPS…QHPH) and 476-505 (ALFD…SLAG). Residues 496-505 (ESSVSGSLAG) show a composition bias toward polar residues. A Protein kinase domain is found at 662–921 (LVLDREIGHG…PTFVYLTEFF (260 aa)). ATP contacts are provided by residues 668-676 (IGHGEFGSV) and K698. The Proton acceptor role is filled by D789. Y927 is modified (phosphotyrosine).

It belongs to the protein kinase superfamily. Tyr protein kinase family. As to quaternary structure, interacts with drpr; this is required for the recruitment of drpr and glial cells to severed axons and for the phagocytosis of axonal debris by glial cells following axon injury. In terms of tissue distribution, gastrulation embryos show expression in ectodermal cells along the cephalic furrow and ventral midline. Proctodeum, stomodeum and their derived structures (foregut, atrium, pharynx, esophagus and hindgut) continue to show expression from stage 8-9 to late embryos. Other ectodermally derived structures (frontal sac, salivary gland and labium) and developing tracheal system also show expression.

It is found in the cytoplasm. The enzyme catalyses L-tyrosyl-[protein] + ATP = O-phospho-L-tyrosyl-[protein] + ADP + H(+). Functionally, following axon injury, required for recruitment of drpr and glial cells to severed axons and for glial clearance of severed axons from the central nervous system. Together with Src42a and drpr, promotes the migration of macrophages to sites of wounding as part of a signaling cascade where Scr42a detects production of hydrogen peroxide at wound sites which triggers phosphorylation of drpr and subsequent recruitment and activation of shark. May be involved in signal transduction on the apical surface of ectodermal epithelial cells, regulating their polarity during invagination. Crumbs (crb) may be the intracellular signal. The protein is Tyrosine-protein kinase Shark of Drosophila melanogaster (Fruit fly).